The primary structure comprises 119 residues: Class I hydrophobin 2 (119 aa).

Residues 1-22 form the signal peptide; it reads MFARISTIITTLFFAMLAAATA. Cystine bridges form between Cys36–Cys97, Cys45–Cys91, Cys46–Cys79, and Cys98–Cys112.

Belongs to the fungal hydrophobin family. As to quaternary structure, self-assembles to form functional amyloid fibrils called rodlets. Self-assembly into fibrillar rodlets occurs spontaneously at hydrophobic:hydrophilic interfaces and the rodlets further associate laterally to form amphipathic monolayers.

It localises to the secreted. Its subcellular location is the cell wall. Its function is as follows. Aerial growth, conidiation, and dispersal of filamentous fungi in the environment rely upon a capability of their secreting small amphipathic proteins called hydrophobins (HPBs) with low sequence identity. Class I can self-assemble into an outermost layer of rodlet bundles on aerial cell surfaces, conferring cellular hydrophobicity that supports fungal growth, development and dispersal; whereas Class II form highly ordered films at water-air interfaces through intermolecular interactions but contribute nothing to the rodlet structure. Abh2 is a class I hydrophobin involved in the emergence of aerial hyphae and strands. In Agaricus bisporus (White button mushroom), this protein is Class I hydrophobin 2.